A 269-amino-acid chain; its full sequence is 2-dehydro-3-deoxyphosphooctonate aldolase (269 aa).

Belongs to the KdsA family.

It localises to the cytoplasm. The enzyme catalyses D-arabinose 5-phosphate + phosphoenolpyruvate + H2O = 3-deoxy-alpha-D-manno-2-octulosonate-8-phosphate + phosphate. It functions in the pathway carbohydrate biosynthesis; 3-deoxy-D-manno-octulosonate biosynthesis; 3-deoxy-D-manno-octulosonate from D-ribulose 5-phosphate: step 2/3. Its pathway is bacterial outer membrane biogenesis; lipopolysaccharide biosynthesis. The protein is 2-dehydro-3-deoxyphosphooctonate aldolase (kdsA) of Chlamydia pneumoniae (Chlamydophila pneumoniae).